The sequence spans 529 residues: Peptide chain release factor 3 (529 aa).

Residues 11–280 (AKRRTFAIIS…GLVAWAPAPM (270 aa)) enclose the tr-type G domain. Residues 20-27 (SHPDAGKT), 88-92 (DTPGH), and 142-145 (NKLD) contribute to the GTP site.

Belongs to the TRAFAC class translation factor GTPase superfamily. Classic translation factor GTPase family. PrfC subfamily.

It is found in the cytoplasm. Increases the formation of ribosomal termination complexes and stimulates activities of RF-1 and RF-2. It binds guanine nucleotides and has strong preference for UGA stop codons. It may interact directly with the ribosome. The stimulation of RF-1 and RF-2 is significantly reduced by GTP and GDP, but not by GMP. The protein is Peptide chain release factor 3 of Salmonella gallinarum (strain 287/91 / NCTC 13346).